Here is an 867-residue protein sequence, read N- to C-terminus: Alanine--tRNA ligase (867 aa).

The Zn(2+) site is built by H555, H559, C657, and H661.

This sequence belongs to the class-II aminoacyl-tRNA synthetase family. Zn(2+) serves as cofactor.

The protein localises to the cytoplasm. The catalysed reaction is tRNA(Ala) + L-alanine + ATP = L-alanyl-tRNA(Ala) + AMP + diphosphate. Its function is as follows. Catalyzes the attachment of alanine to tRNA(Ala) in a two-step reaction: alanine is first activated by ATP to form Ala-AMP and then transferred to the acceptor end of tRNA(Ala). Also edits incorrectly charged Ser-tRNA(Ala) and Gly-tRNA(Ala) via its editing domain. This Psychromonas ingrahamii (strain DSM 17664 / CCUG 51855 / 37) protein is Alanine--tRNA ligase.